The following is a 67-amino-acid chain: Small ribosomal subunit protein eS17 (67 aa).

It belongs to the eukaryotic ribosomal protein eS17 family.

The sequence is that of Small ribosomal subunit protein eS17 from Thermococcus sibiricus (strain DSM 12597 / MM 739).